Consider the following 61-residue polypeptide: Metallothionein-1 (61 aa).

The residue at position 1 (M1) is an N-acetylmethionine. A beta region spans residues 1 to 29; it reads MDPNCSCSTGGSCTCSSSCGCKNCKCTSC. 20 residues coordinate a divalent metal cation: C5, C7, C13, C15, C19, C21, C24, C26, C29, C33, C34, C36, C37, C41, C44, C48, C50, C57, C59, and C60. Residues 30-61 form an alpha region; it reads KKSCCSCCPVGCSKCAQGCVCKGASDKCTCCA.

The protein belongs to the metallothionein superfamily. Type 1 family.

Functionally, metallothioneins have a high content of cysteine residues that bind various heavy metals; these proteins are transcriptionally regulated by both heavy metals and glucocorticoids. The chain is Metallothionein-1 (Mt1) from Rattus norvegicus (Rat).